The primary structure comprises 92 residues: Small ribosomal subunit protein uS19c (92 aa).

Belongs to the universal ribosomal protein uS19 family.

Its subcellular location is the plastid. It localises to the chloroplast. Protein S19 forms a complex with S13 that binds strongly to the 16S ribosomal RNA. This Guizotia abyssinica (Niger) protein is Small ribosomal subunit protein uS19c.